We begin with the raw amino-acid sequence, 120 residues long: FK506-binding protein 1B (120 aa).

The disordered stretch occupies residues 1-26 (MGLEKQTLRMGNGKDHPQPGDPVELN). Residues 20–115 (GDPVELNYTG…VFEVELLKIK (96 aa)) enclose the PPIase FKBP-type domain.

It belongs to the FKBP-type PPIase family. FKBP1 subfamily.

The catalysed reaction is [protein]-peptidylproline (omega=180) = [protein]-peptidylproline (omega=0). Inhibited by both FK506 and rapamycin. Its function is as follows. PPIases accelerate the folding of proteins. It catalyzes the cis-trans isomerization of proline imidic peptide bonds in oligopeptides. The chain is FK506-binding protein 1B (fpr1B) from Aspergillus fumigatus (strain ATCC MYA-4609 / CBS 101355 / FGSC A1100 / Af293) (Neosartorya fumigata).